Consider the following 344-residue polypeptide: Heat-inducible transcription repressor HrcA (344 aa).

It belongs to the HrcA family.

Its function is as follows. Negative regulator of class I heat shock genes (grpE-dnaK-dnaJ and groELS operons). Prevents heat-shock induction of these operons. The polypeptide is Heat-inducible transcription repressor HrcA (Streptococcus equi subsp. equi (strain 4047)).